Consider the following 173-residue polypeptide: Crossover junction endodeoxyribonuclease RuvC (173 aa).

Active-site residues include Asp-8, Glu-69, and Asp-141. Mg(2+) is bound by residues Asp-8, Glu-69, and Asp-141.

It belongs to the RuvC family. In terms of assembly, homodimer which binds Holliday junction (HJ) DNA. The HJ becomes 2-fold symmetrical on binding to RuvC with unstacked arms; it has a different conformation from HJ DNA in complex with RuvA. In the full resolvosome a probable DNA-RuvA(4)-RuvB(12)-RuvC(2) complex forms which resolves the HJ. Mg(2+) serves as cofactor.

Its subcellular location is the cytoplasm. The catalysed reaction is Endonucleolytic cleavage at a junction such as a reciprocal single-stranded crossover between two homologous DNA duplexes (Holliday junction).. The RuvA-RuvB-RuvC complex processes Holliday junction (HJ) DNA during genetic recombination and DNA repair. Endonuclease that resolves HJ intermediates. Cleaves cruciform DNA by making single-stranded nicks across the HJ at symmetrical positions within the homologous arms, yielding a 5'-phosphate and a 3'-hydroxyl group; requires a central core of homology in the junction. The consensus cleavage sequence is 5'-(A/T)TT(C/G)-3'. Cleavage occurs on the 3'-side of the TT dinucleotide at the point of strand exchange. HJ branch migration catalyzed by RuvA-RuvB allows RuvC to scan DNA until it finds its consensus sequence, where it cleaves and resolves the cruciform DNA. This Stenotrophomonas maltophilia (strain R551-3) protein is Crossover junction endodeoxyribonuclease RuvC.